The primary structure comprises 211 residues: MTKTLYITAHPHDERASYSMAAGKAFIESYKEAHPDDEVIHLDLYRENIPQIDADVFSGWGKLQSGSGFEQLSEHEKAKVGRLNELSEQFIAGDKYVFVTPLWNFSFPPVMKAYFDAVAVAGKTFKYTEQGPIGLLTDKKALHIQARGGYYSEGQAAELEMGHRYISIMMQFFGVPEFEGLFIEGHNAEPDKAEEIKQNAIVRAKELGRTF.

Position 17 to 19 (17 to 19) interacts with FMN; sequence SYS.

This sequence belongs to the azoreductase type 1 family. As to quaternary structure, homodimer. The cofactor is FMN.

The enzyme catalyses 2 a quinone + NADH + H(+) = 2 a 1,4-benzosemiquinone + NAD(+). It catalyses the reaction N,N-dimethyl-1,4-phenylenediamine + anthranilate + 2 NAD(+) = 2-(4-dimethylaminophenyl)diazenylbenzoate + 2 NADH + 2 H(+). Quinone reductase that provides resistance to thiol-specific stress caused by electrophilic quinones. In terms of biological role, also exhibits azoreductase activity. Catalyzes the reductive cleavage of the azo bond in aromatic azo compounds to the corresponding amines. The protein is FMN-dependent NADH:quinone oxidoreductase 2 of Bacillus licheniformis (strain ATCC 14580 / DSM 13 / JCM 2505 / CCUG 7422 / NBRC 12200 / NCIMB 9375 / NCTC 10341 / NRRL NRS-1264 / Gibson 46).